The following is a 441-amino-acid chain: DNA primase DnaG (441 aa).

Residues 165–241 form the Toprim domain; the sequence is DTIIIVEGRA…DIDYVARAPP (77 aa). Residues Glu171, Asp215, and Asp217 each contribute to the Mg(2+) site. Over residues 299–315 the composition is skewed to basic and acidic residues; that stretch reads KEEVAERGEEMESKAEG. The disordered stretch occupies residues 299–320; it reads KEEVAERGEEMESKAEGAEQPT.

It belongs to the archaeal DnaG primase family. Forms a ternary complex with MCM helicase and DNA. Component of the archaeal exosome complex. Mg(2+) is required as a cofactor.

It carries out the reaction ssDNA + n NTP = ssDNA/pppN(pN)n-1 hybrid + (n-1) diphosphate.. RNA polymerase that catalyzes the synthesis of short RNA molecules used as primers for DNA polymerase during DNA replication. Also part of the exosome, which is a complex involved in RNA degradation. Acts as a poly(A)-binding protein that enhances the interaction between heteromeric, adenine-rich transcripts and the exosome. This chain is DNA primase DnaG, found in Ignicoccus hospitalis (strain KIN4/I / DSM 18386 / JCM 14125).